A 93-amino-acid chain; its full sequence is uncharacterized protein (93 aa).

The next 2 helical transmembrane spans lie at 8–28 (FIGI…LLAS) and 54–74 (ACFL…YLIL).

The protein resides in the cell membrane. This is an uncharacterized protein from Methanocaldococcus jannaschii (strain ATCC 43067 / DSM 2661 / JAL-1 / JCM 10045 / NBRC 100440) (Methanococcus jannaschii).